We begin with the raw amino-acid sequence, 187 residues long: Protein GrpE (187 aa).

The segment covering 1–11 has biased composition (basic and acidic residues); sequence MTDSSNEHETE. The disordered stretch occupies residues 1–23; sequence MTDSSNEHETENPSVPNPDNEIQ.

It belongs to the GrpE family. As to quaternary structure, homodimer.

It localises to the cytoplasm. Its function is as follows. Participates actively in the response to hyperosmotic and heat shock by preventing the aggregation of stress-denatured proteins, in association with DnaK and GrpE. It is the nucleotide exchange factor for DnaK and may function as a thermosensor. Unfolded proteins bind initially to DnaJ; upon interaction with the DnaJ-bound protein, DnaK hydrolyzes its bound ATP, resulting in the formation of a stable complex. GrpE releases ADP from DnaK; ATP binding to DnaK triggers the release of the substrate protein, thus completing the reaction cycle. Several rounds of ATP-dependent interactions between DnaJ, DnaK and GrpE are required for fully efficient folding. The sequence is that of Protein GrpE from Chlamydia felis (strain Fe/C-56) (Chlamydophila felis).